The chain runs to 134 residues: Small ribosomal subunit protein uS8c (134 aa).

Belongs to the universal ribosomal protein uS8 family. As to quaternary structure, part of the 30S ribosomal subunit.

The protein resides in the plastid. Its function is as follows. One of the primary rRNA binding proteins, it binds directly to 16S rRNA central domain where it helps coordinate assembly of the platform of the 30S subunit. This Cuscuta obtusiflora (Peruvian dodder) protein is Small ribosomal subunit protein uS8c (rps8).